Reading from the N-terminus, the 497-residue chain is MSQIPETSDIVLIGAGIMSATLGTVLKELEPSLSVTMLETLHDCGQESSQAWNNAGTGHAANCELNYTPQRPDGSVDITKALEVNTEFDISRQLWAHLVTKGAIPDPRAFLHPCPHMSFVWGDDNVAFLRQRHREMAAHHCYHGMEFSEDSAQIAAWAPLIIEGRKPGQPIAATRIISGADVDYGALTHLLVKQLQAQSGFSVHYKHRVVALARGDDGRWLVTVENVASAERTTISARFVFAGAGGGALDILQKSGIPEGNGYAGFPVSGIWLRCDVDDISVRHHAKVYGKAAHGSPPMSVPHLDTRIIGGKRSLLFGPYAGFSSKFLKHGSYADLLRSIEPGNILPMLAVARDDWQLSEYLIGQVLQTSEHQFAALQGFFPRAQREDWQRAVAGQRVQIIKPDPQHTGVLEFGTELVASADNSFVALLGASPGASTAAFIAMEVLQKCFDDRLTPDGWLGALKQMIPTYGIDLKQDAAACRDSRARTAKVLQLDFV.

This sequence belongs to the MQO family. FAD is required as a cofactor.

It carries out the reaction (S)-malate + a quinone = a quinol + oxaloacetate. It functions in the pathway carbohydrate metabolism; tricarboxylic acid cycle; oxaloacetate from (S)-malate (quinone route): step 1/1. This is Probable malate:quinone oxidoreductase from Rhodopseudomonas palustris (strain ATCC BAA-98 / CGA009).